A 226-amino-acid chain; its full sequence is PKHD-type hydroxylase PSPA7_5129 (226 aa).

The region spanning 78–178 (KVFPPLFNCY…RYASFFWTQS (101 aa)) is the Fe2OG dioxygenase domain. The Fe cation site is built by histidine 96, aspartate 98, and histidine 159. Residue arginine 169 coordinates 2-oxoglutarate.

Fe(2+) is required as a cofactor. L-ascorbate serves as cofactor.

The polypeptide is PKHD-type hydroxylase PSPA7_5129 (Pseudomonas paraeruginosa (strain DSM 24068 / PA7) (Pseudomonas aeruginosa (strain PA7))).